Consider the following 894-residue polypeptide: Phosphoenolpyruvate carboxylase (894 aa).

Residues His143 and Lys556 contribute to the active site.

This sequence belongs to the PEPCase type 1 family. The cofactor is Mg(2+).

It carries out the reaction oxaloacetate + phosphate = phosphoenolpyruvate + hydrogencarbonate. In terms of biological role, forms oxaloacetate, a four-carbon dicarboxylic acid source for the tricarboxylic acid cycle. This Acinetobacter baumannii (strain ATCC 17978 / DSM 105126 / CIP 53.77 / LMG 1025 / NCDC KC755 / 5377) protein is Phosphoenolpyruvate carboxylase.